The sequence spans 314 residues: Hydrolase 4 (314 aa).

The short motif at 73–75 (HGA) is the Involved in the stabilization of the negatively charged intermediate by the formation of the oxyanion hole element. Catalysis depends on residues Ser-165 and Asp-260.

Belongs to the 'GDXG' lipolytic enzyme family.

It participates in alkaloid biosynthesis. Its function is as follows. Component of the seco-iridoid and derivatives monoterpenoid indole alkaloids (MIAs, e.g. vincadifformine) biosynthesis pathway. Catalyzes the conversion of O-acetylstemmadenine (OAS) to vincadifformine. May also trigger the formation of additional unknown MIAs. This Catharanthus roseus (Madagascar periwinkle) protein is Hydrolase 4.